Reading from the N-terminus, the 129-residue chain is Dynein 14 kDa light chain, flagellar outer arm (129 aa).

Positions 2–109 (AFITEIANEA…LNRIVTELSG (108 aa)) constitute a Thioredoxin domain. Cysteines 34 and 37 form a disulfide. Residues 107–129 (LSGKNPPPAAPAAAPAAPAAEAS) form a disordered region. The span at 117-129 (PAAAPAAPAAEAS) shows a compositional bias: low complexity.

As to quaternary structure, consists of at least 3 heavy chains (alpha, beta and gamma), 2 intermediate chains and 8 light chains.

It is found in the cell projection. The protein resides in the cilium. The protein localises to the flagellum. It localises to the cytoplasm. Its subcellular location is the cytoskeleton. It is found in the flagellum axoneme. In terms of biological role, may be involved in regulating the redox state of functionally important thiol groups within dynein. The sequence is that of Dynein 14 kDa light chain, flagellar outer arm from Chlamydomonas reinhardtii (Chlamydomonas smithii).